The primary structure comprises 309 residues: Short chain dehydrogenase MYCFIDRAFT_6125 (309 aa).

Residues Ile-43, Arg-67, Asp-88, and Arg-150 each contribute to the NADP(+) site. Residue Ser-168 is the Proton donor of the active site. NADP(+) contacts are provided by Tyr-182, Lys-186, Val-215, and Ser-217. Residue Tyr-182 is the Proton acceptor of the active site. Residue Lys-186 is the Lowers pKa of active site Tyr of the active site.

Belongs to the short-chain dehydrogenases/reductases (SDR) family.

Its pathway is secondary metabolite biosynthesis. In terms of biological role, short chain dehydrogenase; part of the gene cluster that mediates the biosynthesis of an emodin derivative that may be involved in black Sigatoka disease of banana. The pathway begins with the synthesis of atrochrysone thioester by the polyketide synthase PKS8-1. The atrochrysone carboxyl ACP thioesterase MYCFIDRAFT_190111 then breaks the thioester bond and releases the atrochrysone carboxylic acid from PKS8-1. The decarboxylase MYCFIDRAFT_34057 then catalyzes the concerted decarboxylation-elimination required to convert atochrysone carboxylic acid into emodin anthrone, which is further oxidized to emodin by the anthrone oxygenase MYCFIDRAFT_34418. The functions of the other tailoring enzymes as well as the final product of the cluster have still to be identified. The sequence is that of Short chain dehydrogenase MYCFIDRAFT_6125 from Pseudocercospora fijiensis (strain CIRAD86) (Black leaf streak disease fungus).